Consider the following 62-residue polypeptide: Conotoxin Pn-014 (62 aa).

A signal peptide spans Met1 to Ala22. Positions Arg23–Ser48 are excised as a propeptide. Residue Trp61 is modified to Tryptophan amide.

It belongs to the conotoxin T superfamily. Post-translationally, contains 2 disulfide bonds that can be either 'C1-C3, C2-C4' or 'C1-C4, C2-C3', since these disulfide connectivities have been observed for conotoxins with cysteine framework V (for examples, see AC P0DQQ7 and AC P81755). Expressed by the venom duct.

The protein localises to the secreted. This is Conotoxin Pn-014 from Conus pennaceus (Feathered cone).